The primary structure comprises 79 residues: Sec-independent protein translocase protein TatA (79 aa).

A helical transmembrane segment spans residues 1–21 (MGFSTTHLLIFLVIIIVIFGT). Residues 43–63 (KEGSDKAADAPAAAPQQVASS) form a disordered region. Low complexity predominate over residues 51–63 (DAPAAAPQQVASS).

This sequence belongs to the TatA/E family. In terms of assembly, the Tat system comprises two distinct complexes: a TatABC complex, containing multiple copies of TatA, TatB and TatC subunits, and a separate TatA complex, containing only TatA subunits. Substrates initially bind to the TatABC complex, which probably triggers association of the separate TatA complex to form the active translocon.

The protein resides in the cell inner membrane. In terms of biological role, part of the twin-arginine translocation (Tat) system that transports large folded proteins containing a characteristic twin-arginine motif in their signal peptide across membranes. TatA could form the protein-conducting channel of the Tat system. In Albidiferax ferrireducens (strain ATCC BAA-621 / DSM 15236 / T118) (Rhodoferax ferrireducens), this protein is Sec-independent protein translocase protein TatA.